The primary structure comprises 353 residues: Probable dual-specificity RNA methyltransferase RlmN (353 aa).

E104 (proton acceptor) is an active-site residue. A Radical SAM core domain is found at D112–D341. C119 and C346 are oxidised to a cystine. [4Fe-4S] cluster-binding residues include C126, C130, and C133. S-adenosyl-L-methionine contacts are provided by residues G173–E174, S205, S228–N230, and N304. Residue C346 is the S-methylcysteine intermediate of the active site.

This sequence belongs to the radical SAM superfamily. RlmN family. It depends on [4Fe-4S] cluster as a cofactor.

Its subcellular location is the cytoplasm. It carries out the reaction adenosine(2503) in 23S rRNA + 2 reduced [2Fe-2S]-[ferredoxin] + 2 S-adenosyl-L-methionine = 2-methyladenosine(2503) in 23S rRNA + 5'-deoxyadenosine + L-methionine + 2 oxidized [2Fe-2S]-[ferredoxin] + S-adenosyl-L-homocysteine. It catalyses the reaction adenosine(37) in tRNA + 2 reduced [2Fe-2S]-[ferredoxin] + 2 S-adenosyl-L-methionine = 2-methyladenosine(37) in tRNA + 5'-deoxyadenosine + L-methionine + 2 oxidized [2Fe-2S]-[ferredoxin] + S-adenosyl-L-homocysteine. In terms of biological role, specifically methylates position 2 of adenine 2503 in 23S rRNA and position 2 of adenine 37 in tRNAs. The sequence is that of Probable dual-specificity RNA methyltransferase RlmN from Leptospira interrogans serogroup Icterohaemorrhagiae serovar copenhageni (strain Fiocruz L1-130).